We begin with the raw amino-acid sequence, 85 residues long: Large ribosomal subunit protein bL27 (85 aa).

Residues 1-21 (MAHKKGVGSSRNGRDSDGQRL) are disordered.

Belongs to the bacterial ribosomal protein bL27 family.

The sequence is that of Large ribosomal subunit protein bL27 from Geobacter sp. (strain M21).